An 87-amino-acid chain; its full sequence is Small ribosomal subunit protein bS20 (87 aa).

Residues 1–26 form a disordered region; sequence MANIKSAKKRAVQSEKARKHNASRRS.

This sequence belongs to the bacterial ribosomal protein bS20 family.

Its function is as follows. Binds directly to 16S ribosomal RNA. The polypeptide is Small ribosomal subunit protein bS20 (Klebsiella pneumoniae (strain 342)).